The sequence spans 99 residues: Small ribosomal subunit protein bS20 (99 aa).

Belongs to the bacterial ribosomal protein bS20 family.

Binds directly to 16S ribosomal RNA. In Chlamydia pneumoniae (Chlamydophila pneumoniae), this protein is Small ribosomal subunit protein bS20.